The primary structure comprises 327 residues: Ornithine carbamoyltransferase, mitochondrial (327 aa).

Carbamoyl phosphate contacts are provided by residues 63–66 (STRT), Arg114, His141, and Gln144. L-ornithine contacts are provided by Asn172, Asp236, Ser240, and Met241. Cys276 (proton acceptor) is an active-site residue. Residues 276-277 (CL) and Arg303 each bind carbamoyl phosphate.

It belongs to the aspartate/ornithine carbamoyltransferase superfamily. OTCase family. In terms of assembly, interacts with trx2.

It localises to the mitochondrion matrix. It carries out the reaction carbamoyl phosphate + L-ornithine = L-citrulline + phosphate + H(+). It functions in the pathway amino-acid biosynthesis; L-arginine biosynthesis; L-arginine from L-ornithine and carbamoyl phosphate: step 1/3. In terms of biological role, ornithine carbamoyltransferase involved in the synthesis of arginine from glutamate via ornithine and the urea cycle. The protein is Ornithine carbamoyltransferase, mitochondrial (arg3) of Schizosaccharomyces pombe (strain 972 / ATCC 24843) (Fission yeast).